A 211-amino-acid polypeptide reads, in one-letter code: MYQPDFPPVPFRLGLYPVVDSVQWIERLLDAGVRTLQLRIKDRRDEEVEADVVAAIALGRRYNARLFINDYWRLAIKHQAYGVHLGQEDLQATDLSAIRAAGLRLGVSTHDDMEIDVALAARPSYIALGHVFPTQTKQMPSAAQGLEQLARHVERLADYPTVAIGGISLPRAPAVIATGVGSIAVVSAITQAADWRLATAQLLEIAGVGDE.

Residues 37-41 (QLRIK) and Asn69 each bind 4-amino-2-methyl-5-(diphosphooxymethyl)pyrimidine. Residues Asp70 and Asp89 each coordinate Mg(2+). Ser108 is a 4-amino-2-methyl-5-(diphosphooxymethyl)pyrimidine binding site. 134-136 (TQT) contributes to the 2-[(2R,5Z)-2-carboxy-4-methylthiazol-5(2H)-ylidene]ethyl phosphate binding site. Lys137 provides a ligand contact to 4-amino-2-methyl-5-(diphosphooxymethyl)pyrimidine. 2-[(2R,5Z)-2-carboxy-4-methylthiazol-5(2H)-ylidene]ethyl phosphate-binding positions include Gly166 and 186-187 (VS).

The protein belongs to the thiamine-phosphate synthase family. Requires Mg(2+) as cofactor.

The catalysed reaction is 2-[(2R,5Z)-2-carboxy-4-methylthiazol-5(2H)-ylidene]ethyl phosphate + 4-amino-2-methyl-5-(diphosphooxymethyl)pyrimidine + 2 H(+) = thiamine phosphate + CO2 + diphosphate. It carries out the reaction 2-(2-carboxy-4-methylthiazol-5-yl)ethyl phosphate + 4-amino-2-methyl-5-(diphosphooxymethyl)pyrimidine + 2 H(+) = thiamine phosphate + CO2 + diphosphate. The enzyme catalyses 4-methyl-5-(2-phosphooxyethyl)-thiazole + 4-amino-2-methyl-5-(diphosphooxymethyl)pyrimidine + H(+) = thiamine phosphate + diphosphate. It participates in cofactor biosynthesis; thiamine diphosphate biosynthesis; thiamine phosphate from 4-amino-2-methyl-5-diphosphomethylpyrimidine and 4-methyl-5-(2-phosphoethyl)-thiazole: step 1/1. Functionally, condenses 4-methyl-5-(beta-hydroxyethyl)thiazole monophosphate (THZ-P) and 2-methyl-4-amino-5-hydroxymethyl pyrimidine pyrophosphate (HMP-PP) to form thiamine monophosphate (TMP). This Shigella dysenteriae serotype 1 (strain Sd197) protein is Thiamine-phosphate synthase.